The following is a 328-amino-acid chain: Protein phosphatase 1 regulatory inhibitor subunit PPP1R7 homolog (328 aa).

13 LRR repeats span residues 13–36 (IGDS…VELP), 37–59 (PNLI…IAQL), 61–82 (TLKK…PLSH), 86–110 (LSDL…IFTK), 111–130 (LLVY…ISKA), 131–153 (SSTL…IEHL), 154–177 (HNLQ…NFTK), 179–196 (EELW…LCGL), 197–221 (KCIK…CVAL), 223–240 (ELYL…LSAL), 241–264 (VNLR…NLTK), 266–287 (EDLW…AVTG), and 289–312 (KEKL…VAAV).

Interacts with human protein phosphatase PPP1C.

Functionally, inhibitor of protein-phosphatase 1 (PP1). Binds to and inhibits PP1 activity. The chain is Protein phosphatase 1 regulatory inhibitor subunit PPP1R7 homolog from Arabidopsis thaliana (Mouse-ear cress).